We begin with the raw amino-acid sequence, 144 residues long: Maximins 3/H16 (144 aa).

A signal peptide spans 1–18; sequence MNFKYIVAVSFLIASAYA. 2 propeptides span residues 19–43 and 73–122; these read RSVQ…REIR and RTAE…KKEK. Residue Ile143 is modified to Isoleucine amide.

This sequence belongs to the bombinin family. As to expression, expressed by the skin glands.

The protein resides in the secreted. In terms of biological role, maximin-3 shows antibacterial activity against both Gram-positive and Gram-negative bacteria. It also shows antimicrobial activity against the fungus C.albicans, but not against A.flavus nor P.uticale. It has little hemolytic activity. It possess a significant cytotoxicity against tumor cell lines. It possess a significant anti-HIV activity. It shows high spermicidal activity. Functionally, maximin-H16 shows antimicrobial activity against bacteria and against the fungus C.albicans. Shows strong hemolytic activity. The sequence is that of Maximins 3/H16 from Bombina maxima (Giant fire-bellied toad).